We begin with the raw amino-acid sequence, 637 residues long: Limonene synthase, chloroplastic (637 aa).

The transit peptide at 1–56 (MALLSIVSLQVPKSCGLKSLISSSNVQKALCISTAVPTLRMRRRQKALVINMKLTT) directs the protein to the chloroplast. Residues D388, D392, and D540 each contribute to the Mg(2+) site. The DDXXD motif motif lies at 388–392 (DDIYD).

The protein belongs to the terpene synthase family. Tpsd subfamily. The cofactor is Mg(2+). Mn(2+) serves as cofactor. Requires K(+) as cofactor.

It is found in the plastid. The protein resides in the chloroplast. It catalyses the reaction (2E)-geranyl diphosphate = (4S)-limonene + diphosphate. It functions in the pathway terpene metabolism; oleoresin biosynthesis. Functionally, involved in defensive oleoresin formation in conifers in response to insect attack or other injury. Involved in monoterpene (C10) olefins biosynthesis. This Abies grandis (Grand fir) protein is Limonene synthase, chloroplastic (ag10).